Here is a 630-residue protein sequence, read N- to C-terminus: 1-deoxy-D-xylulose-5-phosphate synthase (630 aa).

Thiamine diphosphate is bound by residues histidine 80 and 121 to 123 (GHS). Aspartate 152 contributes to the Mg(2+) binding site. Thiamine diphosphate-binding positions include 153–154 (GA), asparagine 181, tyrosine 288, and glutamate 370. Mg(2+) is bound at residue asparagine 181.

The protein belongs to the transketolase family. DXPS subfamily. In terms of assembly, homodimer. The cofactor is Mg(2+). Thiamine diphosphate is required as a cofactor.

The enzyme catalyses D-glyceraldehyde 3-phosphate + pyruvate + H(+) = 1-deoxy-D-xylulose 5-phosphate + CO2. It participates in metabolic intermediate biosynthesis; 1-deoxy-D-xylulose 5-phosphate biosynthesis; 1-deoxy-D-xylulose 5-phosphate from D-glyceraldehyde 3-phosphate and pyruvate: step 1/1. In terms of biological role, catalyzes the acyloin condensation reaction between C atoms 2 and 3 of pyruvate and glyceraldehyde 3-phosphate to yield 1-deoxy-D-xylulose-5-phosphate (DXP). The chain is 1-deoxy-D-xylulose-5-phosphate synthase from Colwellia psychrerythraea (strain 34H / ATCC BAA-681) (Vibrio psychroerythus).